The following is a 177-amino-acid chain: Ribosome maturation factor RimP (177 aa).

The protein belongs to the RimP family.

The protein localises to the cytoplasm. Functionally, required for maturation of 30S ribosomal subunits. In Streptococcus sanguinis (strain SK36), this protein is Ribosome maturation factor RimP.